Reading from the N-terminus, the 470-residue chain is Ribulose bisphosphate carboxylase large chain (470 aa).

Asparagine 115 and threonine 165 together coordinate substrate. Lysine 167 serves as the catalytic Proton acceptor. Lysine 169 lines the substrate pocket. Positions 193, 195, and 196 each coordinate Mg(2+). An N6-carboxylysine modification is found at lysine 193. Histidine 286 acts as the Proton acceptor in catalysis. Substrate contacts are provided by arginine 287, histidine 319, and serine 371.

It belongs to the RuBisCO large chain family. Type I subfamily. Heterohexadecamer of 8 large chains and 8 small chains. Requires Mg(2+) as cofactor.

The protein resides in the carboxysome. The enzyme catalyses 2 (2R)-3-phosphoglycerate + 2 H(+) = D-ribulose 1,5-bisphosphate + CO2 + H2O. It catalyses the reaction D-ribulose 1,5-bisphosphate + O2 = 2-phosphoglycolate + (2R)-3-phosphoglycerate + 2 H(+). Its function is as follows. RuBisCO catalyzes two reactions: the carboxylation of D-ribulose 1,5-bisphosphate, the primary event in carbon dioxide fixation, as well as the oxidative fragmentation of the pentose substrate in the photorespiration process. Both reactions occur simultaneously and in competition at the same active site. The sequence is that of Ribulose bisphosphate carboxylase large chain from Synechococcus sp. (strain CC9902).